A 269-amino-acid polypeptide reads, in one-letter code: Phosphatidylglycerophosphate phosphatase 1, chloroplastic (269 aa).

The transit peptide at 1 to 33 (MRSVPGPSPPCTRSLAHSCRAAARGPCGSARPR) directs the protein to the chloroplast. Positions 25–46 (GPCGSARPRARSVSARAHSSEA) are disordered. The span at 29-46 (SARPRARSVSARAHSSEA) shows a compositional bias: low complexity. The short motif at 103–107 (DKDNT) is the Phosphoryl acceptor element.

The protein belongs to the HAD-like hydrolase superfamily.

The protein localises to the plastid. It localises to the chloroplast. It carries out the reaction a 1,2-diacyl-sn-glycero-3-phospho-(1'-sn-glycero-3'-phosphate) + H2O = a 1,2-diacyl-sn-glycero-3-phospho-(1'-sn-glycerol) + phosphate. Its pathway is phospholipid metabolism; phosphatidylglycerol biosynthesis; phosphatidylglycerol from CDP-diacylglycerol: step 2/2. In terms of biological role, phosphatidylglycerophosphate phosphatase involved in the biosynthesis of phosphatidylglycerol (PG), a phosphoglycerolipid predominantly present in chloroplastic thylakoid membranes and which has important photosynthetic function. Required for thylakoid membranes development and chloroplast function. The protein is Phosphatidylglycerophosphate phosphatase 1, chloroplastic of Chlamydomonas reinhardtii (Chlamydomonas smithii).